Reading from the N-terminus, the 248-residue chain is Small ribosomal subunit protein uS2 (248 aa).

Belongs to the universal ribosomal protein uS2 family.

In Dechloromonas aromatica (strain RCB), this protein is Small ribosomal subunit protein uS2.